The chain runs to 60 residues: Large ribosomal subunit protein eL37 (60 aa).

Zn(2+) is bound by residues Cys19, Cys22, Cys34, and Cys37. A C4-type zinc finger spans residues 19–37; sequence CRRCGSISYHARHKVCSAC.

This sequence belongs to the eukaryotic ribosomal protein eL37 family. Zn(2+) serves as cofactor.

In terms of biological role, binds to the 23S rRNA. The chain is Large ribosomal subunit protein eL37 from Methanosphaerula palustris (strain ATCC BAA-1556 / DSM 19958 / E1-9c).